The chain runs to 119 residues: Probable non-functional T cell receptor gamma variable 11 (119 aa).

The signal sequence occupies residues M1 to G18. In terms of domain architecture, Ig-like spans P23–H119. N32 carries N-linked (GlcNAc...) asparagine glycosylation.

As to quaternary structure, most probably, the gamma-delta TR is not assembled due to incorrect folding of the gamma chain. Gamma-delta TR is a heterodimer composed of a gamma and delta chain; disulfide-linked. The gamma-delta TR is associated with the transmembrane signaling CD3 coreceptor proteins following the stoichiometry: a single gamma-delta TR heterodimer associates with one CD3D-CD3E heterodimer, one CD3G-CD3E heterodimer and one CD247 homodimer forming a stable octameric structure. Upon activation, gamma-delta TR complex associates with FCER1G to initiate intracellular signaling.

It localises to the cell membrane. Probable non-functional open reading frame (ORF) of V region of the variable domain of T cell receptor (TR) gamma chain. Non-functional ORF generally cannot participate in the synthesis of a productive T cell receptor (TR) chain due to altered V-(D)-J or switch recombination and/or splicing site (at mRNA level) and/or conserved amino acid change (protein level). Gamma-delta TRs recognize a variety of self and foreign non-peptide antigens frequently expressed at the epithelial boundaries between the host and external environment, including endogenous lipids presented by MH-like protein CD1D and phosphoantigens presented by butyrophilin-like molecule BTN3A1. Upon antigen recognition induces rapid, innate-like immune responses involved in pathogen clearance and tissue repair. Binding of gamma-delta TR complex to antigen triggers phosphorylation of immunoreceptor tyrosine-based activation motifs (ITAMs) in the CD3 chains by the LCK and FYN kinases, allowing the recruitment, phosphorylation, and activation of ZAP70 that facilitates phosphorylation of the scaffolding proteins LCP2 and LAT. This lead to the formation of a supramolecular signalosome that recruits the phospholipase PLCG1, resulting in calcium mobilization and ERK activation, ultimately leading to T cell expansion and differentiation into effector cells. Gamma-delta TRs are produced through somatic rearrangement of a limited repertoire of variable (V), diversity (D), and joining (J) genes. The potential diversity of gamma-delta TRs is conferred by the unique ability to rearrange (D) genes in tandem and to utilize all three reading frames. The combinatorial diversity is considerably increased by the sequence exonuclease trimming and random nucleotide (N) region additions which occur during the V-(D)-J rearrangements. This Homo sapiens (Human) protein is Probable non-functional T cell receptor gamma variable 11.